The following is a 337-amino-acid chain: Inositol 2-dehydrogenase (337 aa).

The protein belongs to the Gfo/Idh/MocA family. Homotetramer.

It catalyses the reaction myo-inositol + NAD(+) = scyllo-inosose + NADH + H(+). Functionally, involved in the oxidation of myo-inositol (MI) to 2-keto-myo-inositol (2KMI or 2-inosose). In Pseudarthrobacter chlorophenolicus (strain ATCC 700700 / DSM 12829 / CIP 107037 / JCM 12360 / KCTC 9906 / NCIMB 13794 / A6) (Arthrobacter chlorophenolicus), this protein is Inositol 2-dehydrogenase.